The following is a 267-amino-acid chain: L-aspartate dehydrogenase (267 aa).

Positions 124 and 190 each coordinate NAD(+). His-218 is a catalytic residue.

The protein belongs to the L-aspartate dehydrogenase family.

The catalysed reaction is L-aspartate + NADP(+) + H2O = oxaloacetate + NH4(+) + NADPH + H(+). The enzyme catalyses L-aspartate + NAD(+) + H2O = oxaloacetate + NH4(+) + NADH + H(+). The protein operates within cofactor biosynthesis; NAD(+) biosynthesis; iminoaspartate from L-aspartate (dehydrogenase route): step 1/1. In terms of biological role, specifically catalyzes the NAD or NADP-dependent dehydrogenation of L-aspartate to iminoaspartate. This Methanococcus maripaludis (strain C5 / ATCC BAA-1333) protein is L-aspartate dehydrogenase.